Here is a 458-residue protein sequence, read N- to C-terminus: Argininosuccinate lyase (458 aa).

It belongs to the lyase 1 family. Argininosuccinate lyase subfamily.

The protein localises to the cytoplasm. It catalyses the reaction 2-(N(omega)-L-arginino)succinate = fumarate + L-arginine. It functions in the pathway amino-acid biosynthesis; L-arginine biosynthesis; L-arginine from L-ornithine and carbamoyl phosphate: step 3/3. In Actinobacillus pleuropneumoniae serotype 3 (strain JL03), this protein is Argininosuccinate lyase.